A 1014-amino-acid chain; its full sequence is NKSRKRRNRVSFLGAVTVEPPKPIPLTWKTEKPVWVNQWPLPKQKLEALHLLANEQLEKGHIEPSFSPWNSPVFVIQKKSGKWHTLTDLRAVNAVIQPMGPLQPGLPSPAMIPKDWPLIIIDLKDCFFTIPLAEQDCEKFAFTIPAINNKEPATRFQWKVLPQGMLNSPTICQTFVGRALQPVREKFSDCYIIHYIDDILCAAETKDKLIDCYTFLQAEVANAGLAIASDKIQTSTPFHYLGMQIENRKIKPQKIEIRKDTLKTLNDFQKLLGDINWIRPTLGIPTYAMSNLFSILRGDSDLNSQRILTPEATKEIKLVEEKIQSAQINRIDPLAPLQLLIFATAHSPTGIIIQNTDLVEWSFLPHSTVKTFTLYLDQIATLIGQTRLRITKLCGNDPDKIVVPLTKEQVRQAFINSGAWQIGLANFVGLIDNHYPKTKIFQFLKLTTWILPKITRREPLENALTVFTDGSSNGKAAYTGPKERVIKTPYQSAQRDELVAVITVLQDFDQPINIISDSAYVVQATRDVETALIKYSMDDQLNQLFNLLQQTVRKRNFPFYITYIRAHTNLPGPLTKANEQADLLVSSALIKAQELHALTHVNAAGLKNKFDVTWKQAKDIVQHCTQCQVLHLPTQEAGVNPRGLCPNALWQMDVTHVPSFGRLSYVHVTVDTYSHFIWATCQTGESTSHVKKHLLSCFAVMGVPEKIKTDNGPGYCSKAFQKFLSQWKISHTTGIPYNSQGQAIVERTNRTLKTQLVKQKEGGDSKECTTPQMQLNLALYTLNFLNIYRNQTTTSAEQHLTGKKNSPHEGKLIWWKDNKNKTWEIGKVITWGRGFACVSPGENQLPVWLPTRHLKFYNEPIGDAKKRASTEMVTPVTWMDNPIEVYVNDSIWVPGPIDDRCPAKPEEEGMMINISIGYRYPPICLGRAPGCLMPAVQNWLVEVPTVSPISRFTYHMVSGMSLRPRVNYLQDFSYQRSLKFRPKGKPCPKEIPKESKNTEVLVWEECVANSAVIL.

Residues 57–245 form the Reverse transcriptase domain; sequence LEKGHIEPSF…TPFHYLGMQI (189 aa). The short motif at 161 to 164 is the LPQG element; it reads LPQG. Positions 195 to 198 match the YXDD motif; sequence YIDD. An RNase H type-1 domain is found at 460 to 590; sequence LENALTVFTD…ADLLVSSALI (131 aa). The Mg(2+) site is built by D469, E497, D517, and D582. The Integrase-type zinc-finger motif lies at 587 to 628; the sequence is SALIKAQELHALTHVNAAGLKNKFDVTWKQAKDIVQHCTQCQ. 4 residues coordinate Zn(2+): H596, H600, C624, and C627. Residues 642 to 803 enclose the Integrase catalytic domain; that stretch reads RGLCPNALWQ…TSAEQHLTGK (162 aa). Residues 811–859 constitute a DNA-binding region (integrase-type); sequence KLIWWKDNKNKTWEIGKVITWGRGFACVSPGENQLPVWLPTRHLKFYNE.

The protein belongs to the beta type-B retroviral polymerase family. HERV class-II K(HML-2) pol subfamily.

It catalyses the reaction DNA(n) + a 2'-deoxyribonucleoside 5'-triphosphate = DNA(n+1) + diphosphate. The catalysed reaction is Endonucleolytic cleavage to 5'-phosphomonoester.. Early post-infection, the reverse transcriptase converts the viral RNA genome into double-stranded viral DNA. The RNase H domain of the reverse transcriptase performs two functions. It degrades the RNA template and specifically removes the RNA primer from the RNA/DNA hybrid. Following nuclear import, the integrase catalyzes the insertion of the linear, double-stranded viral DNA into the host cell chromosome. Endogenous Pol proteins may have kept, lost or modified their original function during evolution. In Homo sapiens (Human), this protein is Endogenous retrovirus group K member 10 Pol protein (ERVK-10).